An 813-amino-acid polypeptide reads, in one-letter code: Xaa-Pro dipeptidyl-peptidase (813 aa).

Catalysis depends on charge relay system residues S375, D495, and H526.

Belongs to the peptidase S15 family. As to quaternary structure, homodimer.

The protein resides in the cytoplasm. It carries out the reaction Hydrolyzes Xaa-Pro-|- bonds to release unblocked, N-terminal dipeptides from substrates including Ala-Pro-|-p-nitroanilide and (sequentially) Tyr-Pro-|-Phe-Pro-|-Gly-Pro-|-Ile.. Removes N-terminal dipeptides sequentially from polypeptides having unsubstituted N-termini provided that the penultimate residue is proline. The polypeptide is Xaa-Pro dipeptidyl-peptidase (Lactiplantibacillus plantarum (strain ATCC BAA-793 / NCIMB 8826 / WCFS1) (Lactobacillus plantarum)).